A 907-amino-acid polypeptide reads, in one-letter code: Chloride channel protein 2 (907 aa).

Topologically, residues 1–93 are cytoplasmic; that stretch reads MAAATAAAAT…RCHKFLVSRV (93 aa). Positions 22-40 are essential for channel gating by both voltage and cell volume; it reads QYEQTLMYGRYTQELGAFA. Threonine 26 is subject to Phosphothreonine. The interval 42 to 55 is modulates channel gating by both voltage and cell volume; sequence EEAARIRLGGPEPW. The next 2 helical transmembrane spans lie at 94-127 and 136-161; these read GEDW…AQQW and ILLQ…TQIL. The Selectivity filter part_1 signature appears at 167 to 171; sequence GSGIP. Positions 170 to 177 form an intramembrane region, helical; that stretch reads IPEMKTIL. 2 helical membrane passes run 186–204 and 211–229; these read LTLK…ALGS and EGPF…SKFL. Residues 209–213 carry the Selectivity filter part_2 motif; that stretch reads GKEGP. Intramembrane regions (helical) lie at residues 245 to 257 and 261 to 269; these read MLAA…VGCC and PIGGVLFSI. 5 helical membrane-spanning segments follow: residues 281-301, 327-355, 364-383, 435-455, and 463-486; these read YWRG…LAVW, LPAF…VQVM, FLMK…ISTL, ANVF…SALA, and GAFM…MAAW. The short motif at 463 to 467 is the Selectivity filter part_3 element; that stretch reads GAFMP. The helical intramembrane region spans 503–517; the sequence is GGYAVVGAAALAGAV. The note=Loop between two helices intramembrane region spans 518-519; sequence TH. The segment at residues 520-531 is an intramembrane region (helical); that stretch reads TVSTAVIVFELT. The segment at residues 532–536 is an intramembrane region (note=Loop between two helices); it reads GQIAH. Residues 537–554 traverse the membrane as a helical segment; that stretch reads ILPVMIAVILANAVAQSL. Residues 555-907 are Cytoplasmic-facing; sequence QPSLYDSIIR…TPSDSDDKCQ (353 aa). The 59-residue stretch at 590–648 folds into the CBS 1 domain; sequence MVRDVPHVALSCTFRDLRLALHRTKGRMLALVESPESMILLGSIERSQVVALLGAQLSP. Basic residues predominate over residues 650–660; that stretch reads RRRQHMQKLRK. Residues 650–720 form a disordered region; that stretch reads RRRQHMQKLR…NATSLQEGTT (71 aa). The span at 664–678 shows a compositional bias: low complexity; the sequence is SPPSDQESPPSSETS. The segment covering 696–705 has biased composition (basic residues); it reads QTHKPLKPAL. The segment covering 710-720 has biased composition (polar residues); the sequence is SNATSLQEGTT. Position 767 is a phosphoserine (serine 767). The region spanning 799–859 is the CBS 2 domain; that stretch reads IDPAPFQLVE…GSVTAQGVKV (61 aa). Positions 821 to 822 match the Basolateral membrane sorting motif; it reads LL. Positions 865–907 are disordered; that stretch reads SFRDSATSSSDTETTEVHALWGPRSRHGLPREGTPSDSDDKCQ.

This sequence belongs to the chloride channel (TC 2.A.49) family. ClC-2/CLCN2 subfamily. In terms of assembly, homodimer. Interacts with auxiliary subunit HEPACAM. Post-translationally, phosphorylated. Activated by dephosphorylation. As to expression, ubiquitously expressed. Expressed in neurons and glial cells (at protein level).

The protein localises to the cell membrane. The protein resides in the basolateral cell membrane. It localises to the cell projection. Its subcellular location is the dendritic spine membrane. It is found in the axon. The catalysed reaction is chloride(in) = chloride(out). It carries out the reaction thiocyanate(in) = thiocyanate(out). It catalyses the reaction bromide(in) = bromide(out). The enzyme catalyses nitrate(in) = nitrate(out). The catalysed reaction is iodide(out) = iodide(in). With respect to regulation, common gate kinetics are down-regulated by intracellular ATP. Inhibited by AK-42, a derivative of meclofenamate. Inhibited by Cd(2+). Inhibited by Zn(2+) and PKC activation. Inhibited at acidic pH. CCLN2:HEPACAM channel conductance is up-regulated upon hypo-osmolarity. Voltage-gated and osmosensitive chloride channel. Forms a homodimeric channel where each subunit has its own ion conduction pathway. Conducts double-barreled currents controlled by two types of gates, two fast glutamate gates that control each subunit independently and a slow common gate that opens and shuts off both subunits simultaneously. Displays inward rectification currents activated upon membrane hyperpolarization and extracellular hypotonicity. Contributes to chloride conductance involved in neuron excitability. In hippocampal neurons, generates a significant part of resting membrane conductance and provides an additional chloride efflux pathway to prevent chloride accumulation in dendrites upon GABA receptor activation. In glia, associates with the auxiliary subunit HEPACAM/GlialCAM at astrocytic processes and myelinated fiber tracts where it may regulate transcellular chloride flux buffering extracellular chloride and potassium concentrations. Regulates aldosterone production in adrenal glands. The opening of CLCN2 channels at hyperpolarized membrane potentials in the glomerulosa causes cell membrane depolarization, activation of voltage-gated calcium channels and increased expression of aldosterone synthase, the rate-limiting enzyme for aldosterone biosynthesis. Contributes to chloride conductance in retinal pigment epithelium involved in phagocytosis of shed photoreceptor outer segments and photoreceptor renewal. Conducts chloride currents at the basolateral membrane of epithelial cells with a role in chloride reabsorption rather than secretion. Permeable to small monovalent anions with chloride &gt; thiocyanate &gt; bromide &gt; nitrate &gt; iodide ion selectivity. This is Chloride channel protein 2 (Clcn2) from Rattus norvegicus (Rat).